We begin with the raw amino-acid sequence, 197 residues long: Small ribosomal subunit protein eS1 (197 aa).

Belongs to the eukaryotic ribosomal protein eS1 family.

This Methanoculleus marisnigri (strain ATCC 35101 / DSM 1498 / JR1) protein is Small ribosomal subunit protein eS1.